Reading from the N-terminus, the 283-residue chain is Polyamine aminopropyltransferase (283 aa).

A PABS domain is found at 5 to 238; the sequence is TTWIDEYHKG…GIWSWTFASS (234 aa). Position 32 (Gln-32) interacts with S-methyl-5'-thioadenosine. Positions 63 and 87 each coordinate spermidine. S-methyl-5'-thioadenosine contacts are provided by residues Glu-107 and 139 to 140; that span reads DG. The active-site Proton acceptor is Asp-158. 158–161 lines the spermidine pocket; the sequence is DCSD.

It belongs to the spermidine/spermine synthase family. Homodimer or homotetramer.

The protein resides in the cytoplasm. The catalysed reaction is S-adenosyl 3-(methylsulfanyl)propylamine + putrescine = S-methyl-5'-thioadenosine + spermidine + H(+). The protein operates within amine and polyamine biosynthesis; spermidine biosynthesis; spermidine from putrescine: step 1/1. Its function is as follows. Catalyzes the irreversible transfer of a propylamine group from the amino donor S-adenosylmethioninamine (decarboxy-AdoMet) to putrescine (1,4-diaminobutane) to yield spermidine. This Prochlorococcus marinus (strain AS9601) protein is Polyamine aminopropyltransferase.